An 804-amino-acid chain; its full sequence is MTGSFWLLLSLVAVTAAQSTTEEQAKTFLEKFNHEAEDLSYQSSLASWNYNTNITDENVQKMNEARAKWSAFYEEQSRMAKTYSLEEIQNLTLKRQLKALQHSGTSALSAEKSKRLNTILNKMSTIYSTGKVLDPNTQECLALEPGLDDIMENSRDYNRRLWAWEGWRAEVGKQLRPLYEEYVVLENEMARANNYEDYGDYWRGDYEVTGAGDYDYSRDQLMKDVERTFAEIKPLYEQLHAYVRAKLMHTYPSYISPTGCLPAHLLGDMWGRFWTNLYSLTVPFEHKPSIDVTEKMENQSWDAERIFKEAEKFFVSISLPYMTQGFWDNSMLTEPGDGRKVVCHPTAWDLGKGDFRIKMCTKVTMDDFLTAHHEMGHIQYDMAYAAQPYLLRNGANEGFHEAVGEIMSLSAATPHYLKALGLLAPDFHEDNETEINFLLKQALTIVGTLPFTYMLEKWRWMVFKGEIPKQQWMEKWWEMKREIVGVVEPLPHDETYCDPACLFHVAEDYSFIRYYTRTIYQFQFHEALCKTAKHEGALFKCDISNSTEAGQRLLQMLRLGKSEPWTLALENIVGIKTMDVKPLLNYFEPLFTWLKEQNRNSFVGWSTEWTPYSDQSIKVRISLKSALGENAYEWNDNEMYLFQSSVAYAMRKYFSEARNETVLFGEDNVWVSDKKPRISFKFFVTSPNNVSDIIPRTEVENAIRLSRDRINDVFQLDDNSLEFLGIQPTLGPPYEPPVTIWLIIFGVVMGVVVIGIVVLIFTGIRNRRKKNQASSEENPYGSVDLNKGENNSGFQNIDDVQTSL.

Residues 1 to 17 (MTGSFWLLLSLVAVTAA) form the signal peptide. The Extracellular portion of the chain corresponds to 18–739 (QSTTEEQAKT…LGPPYEPPVT (722 aa)). Residues 19–606 (STTEEQAKTF…QNRNSFVGWS (588 aa)) form the Peptidase M2 domain. 2 N-linked (GlcNAc...) asparagine glycosylation sites follow: asparagine 53 and asparagine 90. Chloride is bound at residue arginine 168. Arginine 272 provides a ligand contact to substrate. An N-linked (GlcNAc...) asparagine glycan is attached at asparagine 298. Cysteine 343 and cysteine 360 are oxidised to a cystine. 344-345 (HP) serves as a coordination point for substrate. Histidine 373 contacts Zn(2+). Catalysis depends on glutamate 374, which acts as the Proton acceptor. The Zn(2+) site is built by histidine 377 and glutamate 401. N-linked (GlcNAc...) asparagine glycosylation is present at asparagine 431. Residues tryptophan 476 and lysine 480 each coordinate chloride. The Proton donor role is filled by histidine 504. Residue tyrosine 514 participates in substrate binding. An intrachain disulfide couples cysteine 529 to cysteine 541. Asparagine 545 carries N-linked (GlcNAc...) asparagine glycosylation. The 192-residue stretch at 613-804 (SDQSIKVRIS…QNIDDVQTSL (192 aa)) folds into the Collectrin-like domain. The segment at 651 to 658 (RKYFSEAR) is essential for cleavage by ADAM17. N-linked (GlcNAc...) asparagine glycosylation is found at asparagine 659 and asparagine 689. Residues 696 to 715 (RTEVENAIRLSRDRINDVFQ) form an essential for cleavage by TMPRSS11D and TMPRSS2 region. The chain crosses the membrane as a helical span at residues 740–760 (IWLIIFGVVMGVVVIGIVVLI). At 761-804 (FTGIRNRRKKNQASSEENPYGSVDLNKGENNSGFQNIDDVQTSL) the chain is on the cytoplasmic side. The tract at residues 771 to 804 (NQASSEENPYGSVDLNKGENNSGFQNIDDVQTSL) is disordered. The LIR motif lies at 777 to 785 (ENPYGSVDL). Tyrosine 780 carries the post-translational modification Phosphotyrosine. Residues 780–783 (YGSV) carry the Endocytic sorting signal motif. The short motif at 780–784 (YGSVD) is the SH2-binding element. At serine 782 the chain carries Phosphoserine. A Glycyl lysine isopeptide (Lys-Gly) (interchain with G-Cter in ubiquitin) cross-link involves residue lysine 787. The segment covering 788–804 (GENNSGFQNIDDVQTSL) has biased composition (polar residues). Residues 791-794 (NSGF) carry the PTB motif. The PDZ-binding signature appears at 802 to 804 (TSL).

Belongs to the peptidase M2 family. In terms of assembly, homodimer. Interacts with the catalytically active form of TMPRSS2. Interacts with SLC6A19; this interaction is essential for expression and function of SLC6A19 in intestine. Interacts with ITGA5:ITGB1. Probably interacts (via endocytic sorting signal motif) with AP2M1; the interaction is inhibited by phosphorylation of Tyr-780. Interacts (via PDZ-binding motif) with NHERF1 (via PDZ domains); the interaction may enhance ACE2 membrane residence. Requires Zn(2+) as cofactor. It depends on chloride as a cofactor. Post-translationally, proteolytic cleavage by ADAM17 generates a secreted form. Also cleaved by serine proteases: TMPRSS2, TMPRSS11D and HPN/TMPRSS1. Phosphorylated. Phosphorylation at Tyr-780 probably inhibits interaction with AP2M1 and enables interactions with proteins containing SH2 domains. In terms of processing, ubiquitinated. Ubiquitinated on Lys-787 via 'Lys-48'-linked ubiquitin. 'Lys-48'-linked deubiquitinated by USP50 on the Lys-787; leading to its stabilization.

The protein resides in the secreted. The protein localises to the cell membrane. Its subcellular location is the cytoplasm. It localises to the cell projection. It is found in the cilium. The protein resides in the apical cell membrane. The enzyme catalyses angiotensin II + H2O = angiotensin-(1-7) + L-phenylalanine. It carries out the reaction angiotensin I + H2O = angiotensin-(1-9) + L-leucine. The catalysed reaction is bradykinin(1-8) + H2O = bradykinin(1-7) + L-phenylalanine. It catalyses the reaction neurotensin + H2O = neurotensin-(1-12) + L-leucine. The enzyme catalyses kinetensin + H2O = kinetensin-(1-8) + L-leucine. It carries out the reaction dynorphin A-(1-13) + H2O = dynorphin A-(1-12) + L-lysine. The catalysed reaction is apelin-13 + H2O = apelin-12 + L-phenylalanine. It catalyses the reaction [Pyr1]apelin-13 + H2O = [Pyr1]apelin-12 + L-phenylalanine. The enzyme catalyses apelin-17 + H2O = apelin-16 + L-phenylalanine. In terms of biological role, essential counter-regulatory carboxypeptidase of the renin-angiotensin hormone system that is a critical regulator of blood volume, systemic vascular resistance, and thus cardiovascular homeostasis. Converts angiotensin I to angiotensin 1-9, a nine-amino acid peptide with anti-hypertrophic effects in cardiomyocytes, and angiotensin II to angiotensin 1-7, which then acts as a beneficial vasodilator and anti-proliferation agent, counterbalancing the actions of the vasoconstrictor angiotensin II. Also removes the C-terminal residue from three other vasoactive peptides, neurotensin, kinetensin, and des-Arg bradykinin, but is not active on bradykinin. Also cleaves other biological peptides, such as apelins, casomorphins and dynorphin A. Plays an important role in amino acid transport by acting as binding partner of amino acid transporter SLC6A19 in intestine, regulating trafficking, expression on the cell surface, and its catalytic activity. The protein is Angiotensin-converting enzyme 2 (ACE2) of Bos taurus (Bovine).